A 597-amino-acid chain; its full sequence is MVADNSTSDPHAPGPQLSVTDIVVITVYFALNVAVGIWSSCRASRNTVSGYFLAGRDMTWWPIGASLFGSSEGSGLFIGLAGSGAAGGLAVAGFDWNATYVLLALAWVFGAIYISSEIVTLAEYIQKRFGGQRIRMYLSVLSLLLSVFTKISLDLYAGALFVHICLGWNFYLSTILTLTITALYTITGGLVAVIYTDALQTLIMVVGAVILAIKAFHQIDGYGQMEAAYARAIPSRTVANTTCHLPRADAMHMFRDPYTGDLPWTGMTFGLTIMATWYWCTDQVIVQRSLSARNLNHAKAGSILASYLKMLPMGLMIMPGMISRALFPDEVGCVVPSECLRACGAEIGCSNIAYPKLVMELMPVGLRGLMIAVMMPALMSSLSSIFNSSSTLFTMDIWRRLRPCASERELLLVGRLVIVVLIGVSVAWIPVLQGSNGGQLFIYMQSVTSSLAPPVTAVFTLGIFWQRANEQGAFWGLLAGLAVGATRLVLEFLHPAPPCGAADTRPAVLSQLHYLHFAVALFVLTGAVAVGGSLLTPPPRRHQIENLTWWTLTRDLSLGAKAGDGQTPQRYTFWARVCGFNAILLMCVNIFFYAYFA.

The Extracellular portion of the chain corresponds to 1–16; the sequence is MVADNSTSDPHAPGPQ. Asparagine 5 carries an N-linked (GlcNAc...) asparagine glycan. The helical transmembrane segment at 17–37 threads the bilayer; that stretch reads LSVTDIVVITVYFALNVAVGI. At 38 to 73 the chain is on the cytoplasmic side; sequence WSSCRASRNTVSGYFLAGRDMTWWPIGASLFGSSEG. Serine 49 carries the post-translational modification Phosphoserine. The chain crosses the membrane as a helical span at residues 74–94; it reads SGLFIGLAGSGAAGGLAVAGF. At 95 to 100 the chain is on the extracellular side; the sequence is DWNATY. The chain crosses the membrane as a helical span at residues 101–121; the sequence is VLLALAWVFGAIYISSEIVTL. The Cytoplasmic portion of the chain corresponds to 122–137; it reads AEYIQKRFGGQRIRMY. The helical transmembrane segment at 138-158 threads the bilayer; that stretch reads LSVLSLLLSVFTKISLDLYAG. Residues 159-171 lie on the Extracellular side of the membrane; the sequence is ALFVHICLGWNFY. The chain crosses the membrane as a helical span at residues 172–194; that stretch reads LSTILTLTITALYTITGGLVAVI. The Cytoplasmic segment spans residues 195–200; sequence YTDALQ. The helical transmembrane segment at 201–219 threads the bilayer; sequence TLIMVVGAVILAIKAFHQI. Over 220-265 the chain is Extracellular; it reads DGYGQMEAAYARAIPSRTVANTTCHLPRADAMHMFRDPYTGDLPWT. A helical transmembrane segment spans residues 266 to 286; the sequence is GMTFGLTIMATWYWCTDQVIV. Topologically, residues 287–301 are cytoplasmic; it reads QRSLSARNLNHAKAG. The chain crosses the membrane as a helical span at residues 302-322; that stretch reads SILASYLKMLPMGLMIMPGMI. Topologically, residues 323–367 are extracellular; sequence SRALFPDEVGCVVPSECLRACGAEIGCSNIAYPKLVMELMPVGLR. Residues 368 to 390 traverse the membrane as a helical segment; it reads GLMIAVMMPALMSSLSSIFNSSS. Topologically, residues 391-410 are cytoplasmic; sequence TLFTMDIWRRLRPCASEREL. A helical membrane pass occupies residues 411 to 431; that stretch reads LLVGRLVIVVLIGVSVAWIPV. Residues 432–444 are Extracellular-facing; the sequence is LQGSNGGQLFIYM. Residues 445-465 form a helical membrane-spanning segment; sequence QSVTSSLAPPVTAVFTLGIFW. Residues 466 to 472 are Cytoplasmic-facing; it reads QRANEQG. Residues 473–493 form a helical membrane-spanning segment; sequence AFWGLLAGLAVGATRLVLEFL. Residues 494-514 lie on the Extracellular side of the membrane; the sequence is HPAPPCGAADTRPAVLSQLHY. A helical membrane pass occupies residues 515–535; sequence LHFAVALFVLTGAVAVGGSLL. Residues 536-576 are Cytoplasmic-facing; it reads TPPPRRHQIENLTWWTLTRDLSLGAKAGDGQTPQRYTFWAR. Residues 577 to 597 form a helical membrane-spanning segment; the sequence is VCGFNAILLMCVNIFFYAYFA.

The protein belongs to the sodium:solute symporter (SSF) (TC 2.A.21) family. In terms of tissue distribution, expressed only in kidney.

The protein resides in the apical cell membrane. It carries out the reaction D-mannose(out) + Na(+)(out) = D-mannose(in) + Na(+)(in). The catalysed reaction is D-fructopyranose(out) + Na(+)(out) = D-fructopyranose(in) + Na(+)(in). Electrogenic Na+-coupled sugar symporter that actively transports D-mannose or D-fructose at the plasma membrane, with a Na+ to sugar coupling ratio of 1:1. Transporter activity is driven by a transmembrane Na+ electrochemical gradient set by the Na+/K+ pump. Exclusively recognizes sugar substrates having a pyranose ring with an axial hydroxyl group on carbon 2. Has likely evolved to enable renal reabsorption of D-mannose, an important constituent of oligosaccharide chains of glycoproteins. Contributes to dietary D-fructose reabsorption from glomerular filtrate across the brush border of the kidney. The protein is Sodium/mannose cotransporter SLC5A10 (SLC5A10) of Oryctolagus cuniculus (Rabbit).